Here is a 240-residue protein sequence, read N- to C-terminus: Enolase-phosphatase E1 (240 aa).

Mg(2+) contacts are provided by D9 and E11. Residues S129–S130 and K168 each bind substrate. D195 lines the Mg(2+) pocket.

It belongs to the HAD-like hydrolase superfamily. MasA/MtnC family. Monomer. The cofactor is Mg(2+).

Its subcellular location is the cytoplasm. It is found in the nucleus. It carries out the reaction 5-methylsulfanyl-2,3-dioxopentyl phosphate + H2O = 1,2-dihydroxy-5-(methylsulfanyl)pent-1-en-3-one + phosphate. It functions in the pathway amino-acid biosynthesis; L-methionine biosynthesis via salvage pathway; L-methionine from S-methyl-5-thio-alpha-D-ribose 1-phosphate: step 3/6. The protein operates within amino-acid biosynthesis; L-methionine biosynthesis via salvage pathway; L-methionine from S-methyl-5-thio-alpha-D-ribose 1-phosphate: step 4/6. Bifunctional enzyme that catalyzes the enolization of 2,3-diketo-5-methylthiopentyl-1-phosphate (DK-MTP-1-P) into the intermediate 2-hydroxy-3-keto-5-methylthiopentenyl-1-phosphate (HK-MTPenyl-1-P), which is then dephosphorylated to form the acireductone 1,2-dihydroxy-3-keto-5-methylthiopentene (DHK-MTPene). This Candida tropicalis (strain ATCC MYA-3404 / T1) (Yeast) protein is Enolase-phosphatase E1.